Consider the following 162-residue polypeptide: Peptidyl-prolyl cis-trans isomerase (162 aa).

The 147-residue stretch at 16-162 (KTAYATIKTN…IESVVFSPSL (147 aa)) folds into the PPIase cyclophilin-type domain.

It belongs to the cyclophilin-type PPIase family.

The catalysed reaction is [protein]-peptidylproline (omega=180) = [protein]-peptidylproline (omega=0). In terms of biological role, PPIases accelerate the folding of proteins. It catalyzes the cis-trans isomerization of proline imidic peptide bonds in oligopeptides. In Helicobacter pylori (strain J99 / ATCC 700824) (Campylobacter pylori J99), this protein is Peptidyl-prolyl cis-trans isomerase (ppiA).